The following is a 358-amino-acid chain: Probable dual-specificity RNA methyltransferase RlmN 2 (358 aa).

Glu-90 acts as the Proton acceptor in catalysis. A Radical SAM core domain is found at 96-328; sequence SGIRRTVCVS…VNTCRYTKGD (233 aa). A disulfide bond links Cys-103 and Cys-334. The [4Fe-4S] cluster site is built by Cys-110, Cys-114, and Cys-117. Residues 160 to 161, Ser-192, 215 to 217, and Asn-291 contribute to the S-adenosyl-L-methionine site; these read GE and SLH. Cys-334 (S-methylcysteine intermediate) is an active-site residue.

This sequence belongs to the radical SAM superfamily. RlmN family. [4Fe-4S] cluster is required as a cofactor.

It is found in the cytoplasm. The catalysed reaction is adenosine(2503) in 23S rRNA + 2 reduced [2Fe-2S]-[ferredoxin] + 2 S-adenosyl-L-methionine = 2-methyladenosine(2503) in 23S rRNA + 5'-deoxyadenosine + L-methionine + 2 oxidized [2Fe-2S]-[ferredoxin] + S-adenosyl-L-homocysteine. It carries out the reaction adenosine(37) in tRNA + 2 reduced [2Fe-2S]-[ferredoxin] + 2 S-adenosyl-L-methionine = 2-methyladenosine(37) in tRNA + 5'-deoxyadenosine + L-methionine + 2 oxidized [2Fe-2S]-[ferredoxin] + S-adenosyl-L-homocysteine. In terms of biological role, specifically methylates position 2 of adenine 2503 in 23S rRNA and position 2 of adenine 37 in tRNAs. This Protochlamydia amoebophila (strain UWE25) protein is Probable dual-specificity RNA methyltransferase RlmN 2.